Here is a 263-residue protein sequence, read N- to C-terminus: Shikimate dehydrogenase (NADP(+)) (263 aa).

Shikimate is bound by residues Ser-16 to Ser-18 and Thr-65. Lys-69 (proton acceptor) is an active-site residue. Shikimate contacts are provided by Asn-90 and Asp-105. NADP(+) is bound by residues Gly-125–Ser-129 and Leu-208. Residue Tyr-210 participates in shikimate binding. Gly-230 is an NADP(+) binding site.

Belongs to the shikimate dehydrogenase family. As to quaternary structure, homodimer.

The catalysed reaction is shikimate + NADP(+) = 3-dehydroshikimate + NADPH + H(+). Its pathway is metabolic intermediate biosynthesis; chorismate biosynthesis; chorismate from D-erythrose 4-phosphate and phosphoenolpyruvate: step 4/7. In terms of biological role, involved in the biosynthesis of the chorismate, which leads to the biosynthesis of aromatic amino acids. Catalyzes the reversible NADPH linked reduction of 3-dehydroshikimate (DHSA) to yield shikimate (SA). The protein is Shikimate dehydrogenase (NADP(+)) of Helicobacter pylori (strain G27).